The sequence spans 406 residues: Imidazolonepropionase (406 aa).

Residues H74 and H76 each contribute to the Fe(3+) site. Zn(2+)-binding residues include H74 and H76. 4-imidazolone-5-propanoate is bound by residues R83, Y146, and H179. Y146 is a binding site for N-formimidoyl-L-glutamate. Residue H240 coordinates Fe(3+). Residue H240 coordinates Zn(2+). Residue E243 coordinates 4-imidazolone-5-propanoate. D314 provides a ligand contact to Fe(3+). Position 314 (D314) interacts with Zn(2+). N316 and G318 together coordinate N-formimidoyl-L-glutamate. S319 provides a ligand contact to 4-imidazolone-5-propanoate.

This sequence belongs to the metallo-dependent hydrolases superfamily. HutI family. Zn(2+) is required as a cofactor. It depends on Fe(3+) as a cofactor.

It localises to the cytoplasm. It catalyses the reaction 4-imidazolone-5-propanoate + H2O = N-formimidoyl-L-glutamate. It functions in the pathway amino-acid degradation; L-histidine degradation into L-glutamate; N-formimidoyl-L-glutamate from L-histidine: step 3/3. Its function is as follows. Catalyzes the hydrolytic cleavage of the carbon-nitrogen bond in imidazolone-5-propanoate to yield N-formimidoyl-L-glutamate. It is the third step in the universal histidine degradation pathway. In Kosmotoga olearia (strain ATCC BAA-1733 / DSM 21960 / TBF 19.5.1), this protein is Imidazolonepropionase.